The sequence spans 293 residues: ATP synthase gamma chain (293 aa).

This sequence belongs to the ATPase gamma chain family. As to quaternary structure, F-type ATPases have 2 components, CF(1) - the catalytic core - and CF(0) - the membrane proton channel. CF(1) has five subunits: alpha(3), beta(3), gamma(1), delta(1), epsilon(1). CF(0) has three main subunits: a, b and c.

Its subcellular location is the cell membrane. Its function is as follows. Produces ATP from ADP in the presence of a proton gradient across the membrane. The gamma chain is believed to be important in regulating ATPase activity and the flow of protons through the CF(0) complex. The sequence is that of ATP synthase gamma chain from Streptococcus agalactiae serotype Ia (strain ATCC 27591 / A909 / CDC SS700).